Consider the following 151-residue polypeptide: 3-dehydroquinate dehydratase (151 aa).

Catalysis depends on Y24, which acts as the Proton acceptor. The substrate site is built by N76, H82, and D89. The active-site Proton donor is the H102. Substrate-binding positions include 103–104 (VS) and R113.

It belongs to the type-II 3-dehydroquinase family. In terms of assembly, homododecamer.

It carries out the reaction 3-dehydroquinate = 3-dehydroshikimate + H2O. Its pathway is metabolic intermediate biosynthesis; chorismate biosynthesis; chorismate from D-erythrose 4-phosphate and phosphoenolpyruvate: step 3/7. Functionally, catalyzes a trans-dehydration via an enolate intermediate. This Afipia carboxidovorans (strain ATCC 49405 / DSM 1227 / KCTC 32145 / OM5) (Oligotropha carboxidovorans) protein is 3-dehydroquinate dehydratase.